The primary structure comprises 31 residues: Mycofactocin precursor peptide (31 aa).

This sequence belongs to the mycofactocin precursor peptide family. Post-translationally, the post-translational modifications that lead to mycofactocin involve oxidative decarboxylation of the C-terminal tyrosine residue catalyzed by MftC, introduction of a tyramine-valine cross-link, removal of the modified C-terminal dipeptide by MftE. The released dipeptide then undergoes oxidative deamination by MftD, glycosylation by MftF and methylation by an unknown enzyme.

Functionally, precursor peptide that leads to mycofactocin (MFT) after extensive post-translational modifications by enzymes encoded by adjacent genes. Mycofactocin acts as a redox cofactor of nicotinamide-dependent oxidoreductases encoded in the same locus. Is required for the in vivo ethanol assimilation in M.smegmatis. The sequence is that of Mycofactocin precursor peptide from Mycolicibacterium smegmatis (strain ATCC 700084 / mc(2)155) (Mycobacterium smegmatis).